The sequence spans 340 residues: UDP-3-O-acylglucosamine N-acyltransferase (340 aa).

The active-site Proton acceptor is the H240.

Belongs to the transferase hexapeptide repeat family. LpxD subfamily. In terms of assembly, homotrimer.

It carries out the reaction a UDP-3-O-[(3R)-3-hydroxyacyl]-alpha-D-glucosamine + a (3R)-hydroxyacyl-[ACP] = a UDP-2-N,3-O-bis[(3R)-3-hydroxyacyl]-alpha-D-glucosamine + holo-[ACP] + H(+). It participates in bacterial outer membrane biogenesis; LPS lipid A biosynthesis. Its function is as follows. Catalyzes the N-acylation of UDP-3-O-acylglucosamine using 3-hydroxyacyl-ACP as the acyl donor. Is involved in the biosynthesis of lipid A, a phosphorylated glycolipid that anchors the lipopolysaccharide to the outer membrane of the cell. The protein is UDP-3-O-acylglucosamine N-acyltransferase of Pseudoalteromonas translucida (strain TAC 125).